A 358-amino-acid polypeptide reads, in one-letter code: Putative inhibitor of apoptosis (358 aa).

BIR repeat units follow at residues 4-70 and 90-157; these read EKDR…CPFL and YAAR…CEYL. Residues cysteine 127, cysteine 130, histidine 147, and cysteine 154 each contribute to the Zn(2+) site. Residues 193–283 enclose the CARD domain; that stretch reads EPPNDLSLIR…MLYKHLFVQQ (91 aa). An RING-type zinc finger spans residues 311 to 346; that stretch reads CKVCMDKEVSIVFIPCGHLVVCKDCAPSLRKCPICR.

This sequence belongs to the IAP family.

The polypeptide is Putative inhibitor of apoptosis (PIAP) (Sus scrofa (Pig)).